Reading from the N-terminus, the 393-residue chain is Flavohemoprotein (393 aa).

The 139-residue stretch at 1 to 139 (MLSAEHRAIV…LADLLIGLEE (139 aa)) folds into the Globin domain. Residue His85 participates in heme b binding. Active-site charge relay system residues include Tyr95 and Glu138. Residues 150–393 (GGWRGTRAFV…EFFGPASALD (244 aa)) are reductase. Positions 153 to 256 (RGTRAFVVAR…LTPSGDFTLE (104 aa)) constitute an FAD-binding FR-type domain. FAD-binding positions include Tyr191 and 205-208 (RNYS). An NADP(+)-binding site is contributed by 268-273 (GVGITP). 385 to 388 (FFGP) contributes to the FAD binding site.

The protein belongs to the globin family. Two-domain flavohemoproteins subfamily. In the C-terminal section; belongs to the flavoprotein pyridine nucleotide cytochrome reductase family. It depends on heme b as a cofactor. FAD serves as cofactor.

It catalyses the reaction 2 nitric oxide + NADPH + 2 O2 = 2 nitrate + NADP(+) + H(+). The enzyme catalyses 2 nitric oxide + NADH + 2 O2 = 2 nitrate + NAD(+) + H(+). Functionally, is involved in NO detoxification in an aerobic process, termed nitric oxide dioxygenase (NOD) reaction that utilizes O(2) and NAD(P)H to convert NO to nitrate, which protects the bacterium from various noxious nitrogen compounds. Therefore, plays a central role in the inducible response to nitrosative stress. This Burkholderia sp. (strain TH2) protein is Flavohemoprotein.